A 146-amino-acid polypeptide reads, in one-letter code: Hemoglobin subunit beta (146 aa).

Val1 carries the post-translational modification N-acetylvaline. A Globin domain is found at 2 to 146 (HLTPEEKTAV…VANALAHKYH (145 aa)). Phosphothreonine is present on Thr12. Position 44 is a phosphoserine (Ser44). Lys59 bears the N6-acetyllysine mark. His63 provides a ligand contact to heme b. Lys82 carries the post-translational modification N6-acetyllysine. His92 is a heme b binding site. Position 93 is an S-nitrosocysteine (Cys93). Lys144 is modified (N6-acetyllysine).

This sequence belongs to the globin family. In terms of assembly, heterotetramer of two alpha chains and two beta chains. As to expression, red blood cells.

In terms of biological role, involved in oxygen transport from the lung to the various peripheral tissues. In Mandrillus sphinx (Mandrill), this protein is Hemoglobin subunit beta (HBB).